The sequence spans 477 residues: Bifunctional protein HldE (477 aa).

Positions 1-318 (MKVNLPAFER…ENAVRGRADT (318 aa)) are ribokinase. 195–198 (NLSE) provides a ligand contact to ATP. Aspartate 264 is an active-site residue. Residues 344 to 477 (MTNGVFDILH…IKKIQTESEK (134 aa)) form a cytidylyltransferase region.

This sequence in the N-terminal section; belongs to the carbohydrate kinase PfkB family. The protein in the C-terminal section; belongs to the cytidylyltransferase family. Homodimer.

It catalyses the reaction D-glycero-beta-D-manno-heptose 7-phosphate + ATP = D-glycero-beta-D-manno-heptose 1,7-bisphosphate + ADP + H(+). The catalysed reaction is D-glycero-beta-D-manno-heptose 1-phosphate + ATP + H(+) = ADP-D-glycero-beta-D-manno-heptose + diphosphate. It participates in nucleotide-sugar biosynthesis; ADP-L-glycero-beta-D-manno-heptose biosynthesis; ADP-L-glycero-beta-D-manno-heptose from D-glycero-beta-D-manno-heptose 7-phosphate: step 1/4. Its pathway is nucleotide-sugar biosynthesis; ADP-L-glycero-beta-D-manno-heptose biosynthesis; ADP-L-glycero-beta-D-manno-heptose from D-glycero-beta-D-manno-heptose 7-phosphate: step 3/4. Its function is as follows. Catalyzes the phosphorylation of D-glycero-D-manno-heptose 7-phosphate at the C-1 position to selectively form D-glycero-beta-D-manno-heptose-1,7-bisphosphate. Catalyzes the ADP transfer from ATP to D-glycero-beta-D-manno-heptose 1-phosphate, yielding ADP-D-glycero-beta-D-manno-heptose. In Salmonella enteritidis PT4 (strain P125109), this protein is Bifunctional protein HldE.